A 127-amino-acid polypeptide reads, in one-letter code: Small ribosomal subunit protein uS11 (127 aa).

This sequence belongs to the universal ribosomal protein uS11 family. In terms of assembly, part of the 30S ribosomal subunit. Interacts with proteins S7 and S18. Binds to IF-3.

In terms of biological role, located on the platform of the 30S subunit, it bridges several disparate RNA helices of the 16S rRNA. Forms part of the Shine-Dalgarno cleft in the 70S ribosome. In Chlorobium luteolum (strain DSM 273 / BCRC 81028 / 2530) (Pelodictyon luteolum), this protein is Small ribosomal subunit protein uS11.